The chain runs to 335 residues: Nucleoid-associated protein PputW619_4243 (335 aa).

The protein belongs to the YejK family.

The protein resides in the cytoplasm. The protein localises to the nucleoid. The sequence is that of Nucleoid-associated protein PputW619_4243 from Pseudomonas putida (strain W619).